Reading from the N-terminus, the 379-residue chain is Chaperone protein DnaJ (379 aa).

One can recognise a J domain in the interval 5–70; sequence DYYEILGLDK…QKKAQYDQFG (66 aa). The CR-type zinc-finger motif lies at 135–217; sequence GVEKEISVTR…CRGKGIVRKH (83 aa). 8 residues coordinate Zn(2+): Cys148, Cys151, Cys165, Cys168, Cys191, Cys194, Cys205, and Cys208. 4 CXXCXGXG motif repeats span residues 148–155, 165–172, 191–198, and 205–212; these read CETCNGTG, CDKCNGTG, CDKCGGRG, and CEECRGKG.

The protein belongs to the DnaJ family. Homodimer. Zn(2+) serves as cofactor.

Its subcellular location is the cytoplasm. In terms of biological role, participates actively in the response to hyperosmotic and heat shock by preventing the aggregation of stress-denatured proteins and by disaggregating proteins, also in an autonomous, DnaK-independent fashion. Unfolded proteins bind initially to DnaJ; upon interaction with the DnaJ-bound protein, DnaK hydrolyzes its bound ATP, resulting in the formation of a stable complex. GrpE releases ADP from DnaK; ATP binding to DnaK triggers the release of the substrate protein, thus completing the reaction cycle. Several rounds of ATP-dependent interactions between DnaJ, DnaK and GrpE are required for fully efficient folding. Also involved, together with DnaK and GrpE, in the DNA replication of plasmids through activation of initiation proteins. In Clostridium kluyveri (strain ATCC 8527 / DSM 555 / NBRC 12016 / NCIMB 10680 / K1), this protein is Chaperone protein DnaJ.